Consider the following 92-residue polypeptide: MKFEAVVRTDLGKGASRRLRHANQFPAIVYGGEEVPVAIVLDHDSVINQMDKPAFYEVITLVIDGKEVQVKPQDIQRHPYKPKVNHMDFKRV.

This sequence belongs to the bacterial ribosomal protein bL25 family. As to quaternary structure, part of the 50S ribosomal subunit; part of the 5S rRNA/L5/L18/L25 subcomplex. Contacts the 5S rRNA. Binds to the 5S rRNA independently of L5 and L18.

Functionally, this is one of the proteins that binds to the 5S RNA in the ribosome where it forms part of the central protuberance. This Photobacterium damsela subsp. piscicida (Pasteurella piscicida) protein is Large ribosomal subunit protein bL25.